Consider the following 361-residue polypeptide: Peptide chain release factor 1 (361 aa).

N5-methylglutamine is present on glutamine 238.

This sequence belongs to the prokaryotic/mitochondrial release factor family. In terms of processing, methylated by PrmC. Methylation increases the termination efficiency of RF1.

Its subcellular location is the cytoplasm. Its function is as follows. Peptide chain release factor 1 directs the termination of translation in response to the peptide chain termination codons UAG and UAA. The chain is Peptide chain release factor 1 from Mesomycoplasma hyopneumoniae (strain J / ATCC 25934 / NCTC 10110) (Mycoplasma hyopneumoniae).